The primary structure comprises 755 residues: Exocyst complex component 3 (755 aa).

Lysine 38 carries the post-translational modification N6-acetyllysine.

It belongs to the SEC6 family. In terms of assembly, the exocyst complex is composed of EXOC1, EXOC2, EXOC3, EXOC4, EXOC5, EXOC6, EXOC7 and EXOC8. Interacts with EXOC3L1. Interacts with BIRC6/bruce. Interacts with MYRIP. Interacts with SLC6A9.

It is found in the cytoplasm. It localises to the perinuclear region. The protein resides in the cell projection. Its subcellular location is the growth cone. The protein localises to the midbody. It is found in the golgi apparatus. It localises to the neuron projection. Component of the exocyst complex involved in the docking of exocytic vesicles with fusion sites on the plasma membrane. This chain is Exocyst complex component 3 (Exoc3), found in Mus musculus (Mouse).